Reading from the N-terminus, the 203-residue chain is A-type ATP synthase subunit E (203 aa).

This sequence belongs to the V-ATPase E subunit family. In terms of assembly, might form a homodimer. Interacts with subunit H via residues 41-60. The A-type ATPase is composed of subunits A(3), B(3), C, D, E(1 or 2), F, H(2), I and K(x).

It localises to the cell membrane. In terms of biological role, component of the A-type ATP synthase that produces ATP from ADP in the presence of a proton gradient across the membrane. This Methanocaldococcus jannaschii (strain ATCC 43067 / DSM 2661 / JAL-1 / JCM 10045 / NBRC 100440) (Methanococcus jannaschii) protein is A-type ATP synthase subunit E.